The sequence spans 591 residues: Uncoordinated protein 58 (591 aa).

The disordered stretch occupies residues 1-24; the sequence is MFFYSPNVAPQPSSTSHRRPTLTH. Residues 184-204 traverse the membrane as a helical segment; the sequence is VILVSVLIGYLCLGAWILMLL. N-linked (GlcNAc...) asparagine glycosylation occurs at Asn-226. The next 5 membrane-spanning stretches (helical) occupy residues 289–309, 318–338, 400–420, 428–448, and 453–473; these read TFPT…YGEV, VFSV…AADI, PIGA…AMFI, FIHA…GDIV, and IFLS…TMCV.

This sequence belongs to the two pore domain potassium channel (TC 1.A.1.8) family.

Its subcellular location is the membrane. Its function is as follows. Has a role in mobility, possibly in the transport of potassium in muscles. The chain is Uncoordinated protein 58 from Caenorhabditis elegans.